The primary structure comprises 207 residues: MSGLPQGRPTFGAAQNVSAVVAYDLSAHMLDVVAQAAEARQLKNITTRQGYAESLPFADNAFDIVISRYSAHHWHDVGAALREVNRILKPGGRLIVMDVMSPGHPVRDIWLQTVEALRDTSHVRNYASGEWLTLINEANLIVDNLITDKLPLEFSSWVARMRTPEALVDAIRIYQQSASTEVRTYFALQNDGFFTSDIIMVDAHKAA.

It belongs to the methyltransferase superfamily.

This is an uncharacterized protein from Escherichia coli (strain K12).